Here is a 365-residue protein sequence, read N- to C-terminus: Histidinol-phosphate aminotransferase (365 aa).

The segment at 1–21 is disordered; it reads MSRPVPNPGILDIAPYTPGKS. K221 carries the N6-(pyridoxal phosphate)lysine modification.

This sequence belongs to the class-II pyridoxal-phosphate-dependent aminotransferase family. Histidinol-phosphate aminotransferase subfamily. Homodimer. Requires pyridoxal 5'-phosphate as cofactor.

It carries out the reaction L-histidinol phosphate + 2-oxoglutarate = 3-(imidazol-4-yl)-2-oxopropyl phosphate + L-glutamate. It participates in amino-acid biosynthesis; L-histidine biosynthesis; L-histidine from 5-phospho-alpha-D-ribose 1-diphosphate: step 7/9. The polypeptide is Histidinol-phosphate aminotransferase (Rhodopseudomonas palustris (strain ATCC BAA-98 / CGA009)).